An 82-amino-acid polypeptide reads, in one-letter code: ATP synthase subunit c, chloroplastic (82 aa).

2 helical membrane-spanning segments follow: residues 7 to 27 and 57 to 77; these read AASVVASGLSVGLAAIGPGIG and LAFMESLTIYGLVVALALLFA.

The protein belongs to the ATPase C chain family. As to quaternary structure, F-type ATPases have 2 components, F(1) - the catalytic core - and F(0) - the membrane proton channel. F(1) has five subunits: alpha(3), beta(3), gamma(1), delta(1), epsilon(1). F(0) has four main subunits: a(1), b(1), b'(1) and c(10-14). The alpha and beta chains form an alternating ring which encloses part of the gamma chain. F(1) is attached to F(0) by a central stalk formed by the gamma and epsilon chains, while a peripheral stalk is formed by the delta, b and b' chains.

The protein resides in the plastid. Its subcellular location is the chloroplast thylakoid membrane. In terms of biological role, f(1)F(0) ATP synthase produces ATP from ADP in the presence of a proton or sodium gradient. F-type ATPases consist of two structural domains, F(1) containing the extramembraneous catalytic core and F(0) containing the membrane proton channel, linked together by a central stalk and a peripheral stalk. During catalysis, ATP synthesis in the catalytic domain of F(1) is coupled via a rotary mechanism of the central stalk subunits to proton translocation. Its function is as follows. Key component of the F(0) channel; it plays a direct role in translocation across the membrane. A homomeric c-ring of between 10-14 subunits forms the central stalk rotor element with the F(1) delta and epsilon subunits. The polypeptide is ATP synthase subunit c, chloroplastic (Rhodomonas salina (Cryptomonas salina)).